Here is a 461-residue protein sequence, read N- to C-terminus: Kynurenine 3-monooxygenase (461 aa).

2 helical membrane-spanning segments follow: residues 395–415 and 432–452; these read TIMNSIFPKSWIPLYSMVTFS and ILSRIMTTTSTLALIGAAAGI.

It belongs to the aromatic-ring hydroxylase family. KMO subfamily. Requires FAD as cofactor.

The protein resides in the mitochondrion. Its subcellular location is the membrane. The catalysed reaction is L-kynurenine + NADPH + O2 + H(+) = 3-hydroxy-L-kynurenine + NADP(+) + H2O. It functions in the pathway cofactor biosynthesis; NAD(+) biosynthesis; quinolinate from L-kynurenine: step 1/3. In terms of biological role, catalyzes the hydroxylation of L-kynurenine (L-Kyn) to form 3-hydroxy-L-kynurenine (L-3OHKyn). Required for synthesis of quinolinic acid. The chain is Kynurenine 3-monooxygenase from Caenorhabditis elegans.